The primary structure comprises 49 residues: Lectin alpha chain (49 aa).

It belongs to the leguminous lectin family. As to quaternary structure, homotetramer. Post-translationally, the beta and gamma chains are produced by partial proteolytic processing of the lectin alpha chain by an asparaginyl endopeptidase. Mixture of 60% alpha lectin and 40% of its beta and gamma proteolytic fragments. In terms of tissue distribution, seed.

D-mannose/D-glucose-binding lectin. The protein is Lectin alpha chain of Dioclea violacea.